We begin with the raw amino-acid sequence, 244 residues long: tRNA pseudouridine synthase A (244 aa).

The Nucleophile role is filled by aspartate 52. Tyrosine 110 lines the substrate pocket.

The protein belongs to the tRNA pseudouridine synthase TruA family. As to quaternary structure, homodimer.

It catalyses the reaction uridine(38/39/40) in tRNA = pseudouridine(38/39/40) in tRNA. Formation of pseudouridine at positions 38, 39 and 40 in the anticodon stem and loop of transfer RNAs. This is tRNA pseudouridine synthase A from Thermoanaerobacter pseudethanolicus (strain ATCC 33223 / 39E) (Clostridium thermohydrosulfuricum).